Reading from the N-terminus, the 331-residue chain is 6-phosphogluconolactonase (331 aa).

It belongs to the cycloisomerase 2 family.

It catalyses the reaction 6-phospho-D-glucono-1,5-lactone + H2O = 6-phospho-D-gluconate + H(+). The protein operates within carbohydrate degradation; pentose phosphate pathway; D-ribulose 5-phosphate from D-glucose 6-phosphate (oxidative stage): step 2/3. In terms of biological role, catalyzes the hydrolysis of 6-phosphogluconolactone to 6-phosphogluconate. The chain is 6-phosphogluconolactonase from Salmonella choleraesuis (strain SC-B67).